The sequence spans 540 residues: MLO protein homolog 1 (540 aa).

The Extracellular portion of the chain corresponds to 1-16 (MAGGRSGSRELPETPT). A helical transmembrane segment spans residues 17-37 (WAVAVVCAVLVLVSVAMEHGL). Topologically, residues 38–60 (HNLSHWFRRRQKKAMGDALDKIK) are cytoplasmic. The helical transmembrane segment at 61 to 81 (AELMLLGFISLLLTVAQAPIS) threads the bilayer. Residues 82-142 (KICIPKSAAN…MSAKSMHQLH (61 aa)) lie on the Extracellular side of the membrane. The helical transmembrane segment at 143–163 (IFIFVLAVFHVTYCVITMGLG) threads the bilayer. The Cytoplasmic portion of the chain corresponds to 164–265 (RLKMKKWKKW…IKRSLEDDFK (102 aa)). Residues 266–286 (VVVGISLPLWFVGILVLFLDI) form a helical membrane-spanning segment. Position 287 (His287) is a topological domain, extracellular. The helical transmembrane segment at 288-308 (GLGTLIWISFVPLIIVLLVGT) threads the bilayer. Residues 309-347 (KLEMVIMQMAQEIQDRATVIQGAPVVEPSNKYFWFNRPD) are Cytoplasmic-facing. Residues 348–368 (WVLFFIHLTLFHNAFQMAHFV) form a helical membrane-spanning segment. The Extracellular segment spans residues 369-383 (WTMATPGLKKCFHEN). The chain crosses the membrane as a helical span at residues 384–404 (IWLSIVEVIVGISLQVLCSYI). Residues 405–540 (TFPLYALVTQ…DSDFSFSAQR (136 aa)) are Cytoplasmic-facing. Positions 426–447 (EQTMKALMNWRKKAMEKKKVRD) are calmodulin-binding. Residues 468–526 (ASPVHLLQDHRARSDDPPSPITVASPPAPEEDIYPVPAAAASRQLLDDPPDRRWMASSS) are disordered. 2 stretches are compositionally biased toward basic and acidic residues: residues 474-483 (LQDHRARSDD) and 512-521 (LLDDPPDRRW).

This sequence belongs to the MLO family.

It localises to the membrane. May be involved in modulation of pathogen defense and leaf cell death. Activity seems to be regulated by Ca(2+)-dependent calmodulin binding and seems not to require heterotrimeric G proteins. The polypeptide is MLO protein homolog 1 (MLO1) (Oryza sativa subsp. japonica (Rice)).